We begin with the raw amino-acid sequence, 466 residues long: 55 kDa erythrocyte membrane protein (466 aa).

N-acetylthreonine is present on Thr2. Phosphoserine is present on residues Ser13 and Ser19. Thr49 carries the post-translational modification Phosphothreonine. A phosphoserine mark is found at Ser52, Ser57, and Ser110. The region spanning 71–152 is the PDZ domain; the sequence is LIQIEKVTEE…MISLKVIPNQ (82 aa). The region spanning 158–228 is the SH3 domain; the sequence is ALQMFMRAQF…PSPELQEWRV (71 aa). Ser243 bears the Phosphoserine mark. The tract at residues 268–466 is interaction with PALS1; it reads VVSYEEVVRL…PQWVPVSWVY (199 aa). Positions 282 to 451 constitute a Guanylate kinase-like domain; it reads RKTLVLIGAS…TLKKLQEAFD (170 aa).

It belongs to the MAGUK family. In terms of assembly, heterodimer with PALS1. Interacts with DLG5 and NF2. Interacts (via guanylate kinase-like domain) with WHRN (via third PDZ domain). Palmitoylated.

It localises to the cell membrane. The protein resides in the cell projection. The protein localises to the stereocilium. Functionally, essential regulator of neutrophil polarity. Regulates neutrophil polarization by regulating AKT1 phosphorylation through a mechanism that is independent of PIK3CG activity. This chain is 55 kDa erythrocyte membrane protein (MPP1), found in Papio anubis (Olive baboon).